The following is an 81-amino-acid chain: Conotoxin Lt6.4 (81 aa).

The signal sequence occupies residues 1–19 (MKLVLAIVLILMFLSLSAG). A propeptide spanning residues 20-42 (AETSDNGVSRGGHRPQYWPVTPP) is cleaved from the precursor. Cystine bridges form between Cys-46–Cys-60, Cys-53–Cys-65, and Cys-59–Cys-80.

This sequence belongs to the conotoxin I3 superfamily. In terms of tissue distribution, expressed by the venom duct.

It is found in the secreted. The polypeptide is Conotoxin Lt6.4 (Conus litteratus (Lettered cone)).